Reading from the N-terminus, the 440-residue chain is tRNA-2-methylthio-N(6)-dimethylallyladenosine synthase (440 aa).

Positions 4 to 122 (KSYYIITHGC…LPKILERVFE (119 aa)) constitute an MTTase N-terminal domain. [4Fe-4S] cluster contacts are provided by Cys13, Cys49, Cys83, Cys159, Cys163, and Cys166. One can recognise a Radical SAM core domain in the interval 145 to 375 (REPGVRAWVT…IELQNGISLE (231 aa)). One can recognise a TRAM domain in the interval 378 to 440 (KNEEGNIHEI…KLFHLEGVLV (63 aa)).

This sequence belongs to the methylthiotransferase family. MiaB subfamily. Monomer. It depends on [4Fe-4S] cluster as a cofactor.

The protein localises to the cytoplasm. It carries out the reaction N(6)-dimethylallyladenosine(37) in tRNA + (sulfur carrier)-SH + AH2 + 2 S-adenosyl-L-methionine = 2-methylsulfanyl-N(6)-dimethylallyladenosine(37) in tRNA + (sulfur carrier)-H + 5'-deoxyadenosine + L-methionine + A + S-adenosyl-L-homocysteine + 2 H(+). Functionally, catalyzes the methylthiolation of N6-(dimethylallyl)adenosine (i(6)A), leading to the formation of 2-methylthio-N6-(dimethylallyl)adenosine (ms(2)i(6)A) at position 37 in tRNAs that read codons beginning with uridine. The sequence is that of tRNA-2-methylthio-N(6)-dimethylallyladenosine synthase from Carboxydothermus hydrogenoformans (strain ATCC BAA-161 / DSM 6008 / Z-2901).